Reading from the N-terminus, the 704-residue chain is RCC1 domain-containing protein DDB_G0295713 (704 aa).

RCC1 repeat units lie at residues 1-48 (MYCW…VKGE) and 69-120 (KNRC…ITDQ). The interval 221–246 (YNNNNNNNNNNNNNNNNNNNNNNNNN) is disordered. A compositionally biased stretch (low complexity) spans 222–246 (NNNNNNNNNNNNNNNNNNNNNNNNN). Residues 298 to 348 (QNQVYGWGENLNGQLGIEGIDYSTEPILIELPLVEIKHISSGAYHSAFVTN) form an RCC1 3 repeat. Over residues 412 to 431 (IKDKNENNETKHTNKNKDNH) the composition is skewed to basic and acidic residues. A disordered region spans residues 412 to 458 (IKDKNENNETKHTNKNKDNHDDDDESDHSDDDHHDDDDNDKDSQGIN). Residues 432 to 451 (DDDDESDHSDDDHHDDDDND) show a composition bias toward acidic residues. A coiled-coil region spans residues 668–698 (IEQTSTQVANSENENENEIEMKMKMKKNEMK).

In Dictyostelium discoideum (Social amoeba), this protein is RCC1 domain-containing protein DDB_G0295713.